The following is a 951-amino-acid chain: Cadmium/zinc-transporting ATPase HMA2 (951 aa).

Residues 1 to 83 (MASKKMTKSY…VRVTGETNFK (83 aa)) lie on the Cytoplasmic side of the membrane. An HMA domain is found at 7–73 (TKSYFDVLGI…ALNQAQLEAN (67 aa)). The helical transmembrane segment at 84 to 105 (NKWPSPFAVVSGILLLLSFFKY) threads the bilayer. At 106 to 108 (LYS) the chain is on the extracellular side. The chain crosses the membrane as a helical span at residues 109-128 (PFRWLAVAAVVAGIYPILAK). The Cytoplasmic portion of the chain corresponds to 129-135 (AVASLAR). A helical transmembrane segment spans residues 136–156 (FRIDINILVVVTVGATIGMQD). A topological domain (extracellular) is located at residue tyrosine 157. The chain crosses the membrane as a helical span at residues 158–178 (TEAAVVVFLFTIAEWLQSRAS). Residues 179-304 (YKASAVMQSL…KTETQRFIDK (126 aa)) are Cytoplasmic-facing. A helical transmembrane segment spans residues 305-327 (CSKYYTPAIILISICFVAIPFAL). The Extracellular segment spans residues 328–335 (KVHNLKHW). Residues 336-353 (VHLALVVLVSACPCGLIL) traverse the membrane as a helical segment. At 354 to 647 (STPVATFCAL…KLAKRAKRKV (294 aa)) the chain is on the cytoplasmic side. The active-site 4-aspartylphosphate intermediate is the aspartate 391. Residues aspartate 592 and aspartate 596 each coordinate Mg(2+). The chain crosses the membrane as a helical span at residues 648–667 (VENVVISITMKGAILALAFA). Residues 668–671 (GHPL) are Extracellular-facing. A helical membrane pass occupies residues 672–691 (IWAAVLADVGTCLLVILNSM). Residues 692–951 (LLLSDKHKTG…VGTLKEIVIE (260 aa)) are Cytoplasmic-facing. Residues 841-851 (ELQQSCHDKPS) are compositionally biased toward basic and acidic residues. The interval 841-866 (ELQQSCHDKPSGLDIGTGPKHEGSST) is disordered.

The protein belongs to the cation transport ATPase (P-type) (TC 3.A.3) family. Type IB subfamily. Predominantly expressed in the vascular tissues of roots, stems, and leaves. Also detected in developing anthers.

The protein resides in the cell membrane. It carries out the reaction Zn(2+)(in) + ATP + H2O = Zn(2+)(out) + ADP + phosphate + H(+). The enzyme catalyses Cd(2+)(in) + ATP + H2O = Cd(2+)(out) + ADP + phosphate + H(+). Functionally, plays an important role in zinc transport and homeostasis. Could also be involved in cadmium detoxification. The sequence is that of Cadmium/zinc-transporting ATPase HMA2 (HMA2) from Arabidopsis thaliana (Mouse-ear cress).